The chain runs to 180 residues: Nucleoplasmin-3 (180 aa).

An N-acetylalanine modification is found at Ala-2. Phosphoserine is present on residues Ser-13 and Ser-16. An Omega-N-methylarginine modification is found at Arg-27. The disordered stretch occupies residues 141–180; sequence TMSNDVSEEESEEEEEEEDSDEEEAELCPILPAKKQGGRP. A compositionally biased stretch (acidic residues) spans 146-166; sequence VSEEESEEEEEEEDSDEEEAE. Phosphoserine is present on residues Ser-147, Ser-151, and Ser-160.

This sequence belongs to the nucleoplasmin family. In terms of assembly, interacts with NPM (via N-terminus). Forms a pentamer with NPM at a ratio 4:1 (NPM3/NPM). Two pentamers form a decamer. Phosphorylated.

The protein localises to the nucleus. It is found in the nucleolus. Plays a role in the regulation of diverse cellular processes such as ribosome biogenesis, chromatin remodeling or protein chaperoning. Modulates the histone chaperone function and the RNA-binding activity of nucleolar phosphoprotein B23/NPM. Efficiently mediates chromatin remodeling when included in a pentamer containing NPM3 and NPM. In Pongo abelii (Sumatran orangutan), this protein is Nucleoplasmin-3 (NPM3).